A 591-amino-acid polypeptide reads, in one-letter code: MKTGRVIKVSGPLVIAEGMEEANIYDLVKVGEKRLIGEIIEMRGDKASIQVYEETTGLGPGAPVETTGEPLSVELGPGLIESMFDGIQRPLEAIAKKAGSYLTKGIEVFSLNRDKKWHFVPKVKHSDKVKAGDILGTVQETEVVNHKIMVPYGIEGEVITIFEGDYTVEDVVCEIDTKDGVKKVKLMQKWPVRKGRPYAKKLNPEAPLVTGQRIIDTFFPVAKGGAAAVPGPFGSGKTVVQHQLAKWGDAQIVVYIGCGERGNEMTDVLNEFPELKDPKTGKSIMERTVLIANTSNMPVAAREACIYTGITIAEYFRDMGYSVALMADSTSRWAEALREMSGRLEEMPGDEGYPAYLGSRLADFYERAGKVVCLGDDEREGAITAIGAVSPPGGDLSEPVTQATLRIVKVFWGLDAQLAYRRHFPAINWLNSYSLYLDSIGRWMDRNVSEEWVDLRTRAMTILQEEANLEEIVRLVGIDALSESDRLKLEVAKSIREDYLMQNAFHDVDTYSSLEKQYKMLKLVLSFQDEAERALKAGVYLEKITSMVELRDKIARAKFIPEEEMGRIDEIGEELRREIDKLIAEEGVINA.

231-238 (GPFGSGKT) contributes to the ATP binding site.

It belongs to the ATPase alpha/beta chains family.

It carries out the reaction ATP + H2O + 4 H(+)(in) = ADP + phosphate + 5 H(+)(out). Produces ATP from ADP in the presence of a proton gradient across the membrane. The V-type alpha chain is a catalytic subunit. This is V-type ATP synthase alpha chain from Clostridium novyi (strain NT).